The sequence spans 80 residues: RNA-binding protein Hfq (80 aa).

Residues 9 to 69 enclose the Sm domain; it reads DVFLNQVRKE…VSTISPNSPV (61 aa).

Belongs to the Hfq family. Homohexamer.

In terms of biological role, RNA chaperone that binds small regulatory RNA (sRNAs) and mRNAs to facilitate mRNA translational regulation in response to envelope stress, environmental stress and changes in metabolite concentrations. Also binds with high specificity to tRNAs. This is RNA-binding protein Hfq from Alkaliphilus oremlandii (strain OhILAs) (Clostridium oremlandii (strain OhILAs)).